The following is a 189-amino-acid chain: Movement protein p22 (189 aa).

This sequence belongs to the tombusvirus/aureusvirus movement protein p22 family. Interacts with host protein HFI22. Post-translationally, phosphorylated.

It is found in the host membrane. Cell-to-cell movement. Displays RNA-binding activity. This Capsicum annuum (Capsicum pepper) protein is Movement protein p22.